The following is a 339-amino-acid chain: Carboxyvinyl-carboxyphosphonate phosphorylmutase, chloroplastic (339 aa).

The transit peptide at M1 to R30 directs the protein to the chloroplast.

This sequence belongs to the isocitrate lyase/PEP mutase superfamily.

The protein localises to the plastid. Its subcellular location is the chloroplast. The enzyme catalyses 1-carboxyvinyl carboxyphosphonate + H(+) = 3-(hydrohydroxyphosphoryl)pyruvate + CO2. In Arabidopsis thaliana (Mouse-ear cress), this protein is Carboxyvinyl-carboxyphosphonate phosphorylmutase, chloroplastic.